A 342-amino-acid chain; its full sequence is MWNSLKAFALVFGGCCSNVITFETLMSNETGSINNLITFCQFLFVTCQGLPEFLDVHQPFPYFKPLKTPLHVYVITVVLFYISSTTNNNVFKYNISIPIHIVFRCFGTVITMFTCWLLNGRKYTKIQILSTLFLTIGAIIASLFKDADFRYQDLKLQAWKIGSDQSVDLTFIFGICILVLSSFTSSLLSAYNERTYQKYGKHWKENIFYSHFLSLPLFLFSRKQLIHEYRVMRKSERILCSNFGGKILVPREETLLLFNVLTQYFCVKGVNILASKTNALTLSITLLVRKFISLLLSVRLFDNNLSYTGYIGVYLVFFGAFIYSLGSIHPRQNDKGAIKKSK.

Residues 1–6 lie on the Cytoplasmic side of the membrane; that stretch reads MWNSLK. Residues 7 to 27 form a helical membrane-spanning segment; the sequence is AFALVFGGCCSNVITFETLMS. Over 28 to 35 the chain is Lumenal; that stretch reads NETGSINN. A helical transmembrane segment spans residues 36–56; the sequence is LITFCQFLFVTCQGLPEFLDV. Topologically, residues 57-61 are cytoplasmic; sequence HQPFP. A helical transmembrane segment spans residues 62-82; it reads YFKPLKTPLHVYVITVVLFYI. Topologically, residues 83 to 96 are lumenal; the sequence is SSTTNNNVFKYNIS. The helical transmembrane segment at 97-117 threads the bilayer; the sequence is IPIHIVFRCFGTVITMFTCWL. At 118–123 the chain is on the cytoplasmic side; the sequence is LNGRKY. Residues 124-144 traverse the membrane as a helical segment; sequence TKIQILSTLFLTIGAIIASLF. Topologically, residues 145–168 are lumenal; sequence KDADFRYQDLKLQAWKIGSDQSVD. A helical membrane pass occupies residues 169–189; sequence LTFIFGICILVLSSFTSSLLS. At 190–253 the chain is on the cytoplasmic side; that stretch reads AYNERTYQKY…GGKILVPREE (64 aa). Residues 254–274 traverse the membrane as a helical segment; that stretch reads TLLLFNVLTQYFCVKGVNILA. Residues 275 to 307 are Lumenal-facing; sequence SKTNALTLSITLLVRKFISLLLSVRLFDNNLSY. A helical membrane pass occupies residues 308-328; that stretch reads TGYIGVYLVFFGAFIYSLGSI. Residues 329 to 342 lie on the Cytoplasmic side of the membrane; it reads HPRQNDKGAIKKSK.

It belongs to the nucleotide-sugar transporter family. SLC35B subfamily.

It localises to the endoplasmic reticulum. The protein localises to the endoplasmic reticulum membrane. Its function is as follows. Sugar transporter that specifically mediates the transport of UDP-N-acetylglucosamine (UDP-GlcNAc) and is required for cell wall chitin synthesis. This is UDP-N-acetylglucosamine transporter YEA4 (YEA4) from Saccharomyces cerevisiae (strain ATCC 204508 / S288c) (Baker's yeast).